A 296-amino-acid chain; its full sequence is Formamidopyrimidine-DNA glycosylase (296 aa).

The active-site Schiff-base intermediate with DNA is the proline 2. Glutamate 3 (proton donor) is an active-site residue. Residue lysine 58 is the Proton donor; for beta-elimination activity of the active site. Residues histidine 104, arginine 126, and lysine 169 each contribute to the DNA site. The segment at 260-296 (SVYDREGQACGTPGCGGTVARIVQAGRSTFYCAACQK) adopts an FPG-type zinc-finger fold. The active-site Proton donor; for delta-elimination activity is arginine 286.

The protein belongs to the FPG family. Monomer. Zn(2+) is required as a cofactor.

It catalyses the reaction Hydrolysis of DNA containing ring-opened 7-methylguanine residues, releasing 2,6-diamino-4-hydroxy-5-(N-methyl)formamidopyrimidine.. The catalysed reaction is 2'-deoxyribonucleotide-(2'-deoxyribose 5'-phosphate)-2'-deoxyribonucleotide-DNA = a 3'-end 2'-deoxyribonucleotide-(2,3-dehydro-2,3-deoxyribose 5'-phosphate)-DNA + a 5'-end 5'-phospho-2'-deoxyribonucleoside-DNA + H(+). In terms of biological role, involved in base excision repair of DNA damaged by oxidation or by mutagenic agents. Acts as a DNA glycosylase that recognizes and removes damaged bases. Has a preference for oxidized purines, such as 7,8-dihydro-8-oxoguanine (8-oxoG). Has AP (apurinic/apyrimidinic) lyase activity and introduces nicks in the DNA strand. Cleaves the DNA backbone by beta-delta elimination to generate a single-strand break at the site of the removed base with both 3'- and 5'-phosphates. The polypeptide is Formamidopyrimidine-DNA glycosylase (Rhizobium etli (strain CIAT 652)).